Consider the following 147-residue polypeptide: Prefoldin subunit alpha (147 aa).

This sequence belongs to the prefoldin subunit alpha family. Heterohexamer of two alpha and four beta subunits.

Its subcellular location is the cytoplasm. Molecular chaperone capable of stabilizing a range of proteins. Seems to fulfill an ATP-independent, HSP70-like function in archaeal de novo protein folding. This is Prefoldin subunit alpha (pfdA) from Saccharolobus solfataricus (strain ATCC 35092 / DSM 1617 / JCM 11322 / P2) (Sulfolobus solfataricus).